The sequence spans 152 residues: Ribosome maturation factor RimP (152 aa).

Belongs to the RimP family.

Its subcellular location is the cytoplasm. Required for maturation of 30S ribosomal subunits. This is Ribosome maturation factor RimP from Pectobacterium atrosepticum (strain SCRI 1043 / ATCC BAA-672) (Erwinia carotovora subsp. atroseptica).